A 419-amino-acid polypeptide reads, in one-letter code: Peptide chain release factor subunit 1 (419 aa).

Belongs to the eukaryotic release factor 1 family. As to quaternary structure, heterodimer of two subunits, one of which binds GTP.

It is found in the cytoplasm. Functionally, directs the termination of nascent peptide synthesis (translation) in response to the termination codons UAA, UAG and UGA. This is Peptide chain release factor subunit 1 from Methanococcus maripaludis (strain C6 / ATCC BAA-1332).